We begin with the raw amino-acid sequence, 262 residues long: Thrombin-like enzyme gyroxin B1.3 (262 aa).

The N-terminal stretch at methionine 1–alanine 18 is a signal peptide. The propeptide occupies glutamine 19 to serine 262. Positions valine 25–alanine 253 constitute a Peptidase S1 domain. 6 disulfide bridges follow: cysteine 31-cysteine 165, cysteine 52-cysteine 68, cysteine 102-cysteine 260, cysteine 144-cysteine 214, cysteine 176-cysteine 193, and cysteine 204-cysteine 229. Histidine 67 serves as the catalytic Charge relay system. Residue asparagine 105 is glycosylated (N-linked (GlcNAc...) asparagine). The active-site Charge relay system is aspartate 112. Catalysis depends on serine 208, which acts as the Charge relay system.

The protein belongs to the peptidase S1 family. Snake venom subfamily. Monomer. As to expression, expressed by the venom gland.

Its subcellular location is the secreted. Functionally, thrombin-like snake venom serine protease. Displays a specificity similar to trypsin. Releases only fibrinopeptide A in the conversion of fibrinogen to fibrin. Reversibly increases the permeability of the blood brain barrier (BBB) in mice. Induces the barrel rotation syndrome in mice, which is manifested by gyroxin-like, rapid rolling motions. This syndrome may be due to its effect on BBB permeability, and certainly also to other actions affecting endogenous substrates present in the endothelium, nervous tissues or blood. Also shows a moderate inhibitory activity on the human voltage-gated potassium channel Kv10.1/KCNH1/EAG1 (58% current inhibition at 5 uM). It blocks Kv10.1/KCNH1/EAG1 in a time and dose-dependent manner and with a mechanism independent of its enzymatic activity. It may have a preference in interacting with Kv10.1/KCNH1/EAG1 in its closed state, since the inhibitory effect of the toxin is decreased at more depolarized potentials. The polypeptide is Thrombin-like enzyme gyroxin B1.3 (Crotalus durissus terrificus (South American rattlesnake)).